The primary structure comprises 199 residues: NAD(P)H dehydrogenase (quinone) (199 aa).

A Flavodoxin-like domain is found at 4 to 190; it reads VLVLYYSTYG…DGARYQGRHV (187 aa). Residues 10–15 and 78–80 each bind FMN; these read STYGHI and TRY. Residue Tyr12 coordinates NAD(+). Residue Trp98 coordinates substrate. FMN is bound by residues 113–119 and His134; that span reads SSASQHG.

Belongs to the WrbA family. Requires FMN as cofactor.

The enzyme catalyses a quinone + NADH + H(+) = a quinol + NAD(+). The catalysed reaction is a quinone + NADPH + H(+) = a quinol + NADP(+). In Methylobacterium sp. (strain 4-46), this protein is NAD(P)H dehydrogenase (quinone).